Reading from the N-terminus, the 205-residue chain is Ribonuclease HII (205 aa).

Positions 1-203 constitute an RNase H type-2 domain; that stretch reads MKAGIDEAGK…VSNLRQKTLD (203 aa). Aspartate 6 and glutamate 7 together coordinate a divalent metal cation. Residue arginine 46 participates in substrate binding. Aspartate 101 provides a ligand contact to a divalent metal cation. The substrate site is built by lysine 143, arginine 146, and tyrosine 164.

This sequence belongs to the RNase HII family. Mn(2+) is required as a cofactor. The cofactor is Mg(2+).

It localises to the cytoplasm. It catalyses the reaction Endonucleolytic cleavage to 5'-phosphomonoester.. Endonuclease that specifically degrades the RNA of RNA-DNA hybrids. This is Ribonuclease HII (rnhB) from Archaeoglobus fulgidus (strain ATCC 49558 / DSM 4304 / JCM 9628 / NBRC 100126 / VC-16).